A 162-amino-acid polypeptide reads, in one-letter code: uncharacterized protein (162 aa).

Residues 5–25 (IIILFLFTAILCSITLCGCIS) traverse the membrane as a helical segment.

The protein resides in the membrane. This is an uncharacterized protein from Methanocaldococcus jannaschii (strain ATCC 43067 / DSM 2661 / JAL-1 / JCM 10045 / NBRC 100440) (Methanococcus jannaschii).